A 1066-amino-acid polypeptide reads, in one-letter code: Ribosomal protein S6 kinase delta-1 (1066 aa).

Positions 8-132 (SADLARFYTV…DFFKGGIIND (125 aa)) constitute a PX domain. Residues 207 to 228 (VASDSEQSKTEEERESRSLFPG) form a disordered region. Residues 212–223 (EQSKTEEERESR) are compositionally biased toward basic and acidic residues. The MIT domain maps to 277-305 (VQGESSPTRREAVKRRTAEYLMRAESISS). Residues S282, S423, S427, S449, and S455 each carry the phosphoserine modification. One can recognise a Protein kinase 1 domain in the interval 344 to 445 (GVIDKVLLVM…PTLAKVHLQQ (102 aa)). Residues 441-509 (VHLQQPTSSP…SGSSSEEECT (69 aa)) form a disordered region. The span at 448–458 (SSPQDSSSFES) shows a compositional bias: low complexity. The segment covering 474-483 (SSLTPSSQDD) has biased composition (polar residues). Residues 492 to 503 (DSSPKWPDSGSS) show a composition bias toward low complexity. Phosphoserine is present on residues S494, S528, S583, S605, S608, S640, S661, S664, S667, and S794. The disordered stretch occupies residues 553 to 596 (HLAADSDSPSTQLRAHELKFFPNDDPEAVSSPRTSDSLSRSKNS). Residues 582–593 (SSPRTSDSLSRS) are compositionally biased toward low complexity. Residues 794–1056 (SSDPKFQGLG…VEDIKSHPFF (263 aa)) form the Protein kinase 2 domain. ATP-binding positions include 801–809 (GLGVVESAV) and R820. S872 is subject to Phosphoserine. The active-site Proton acceptor is the D929.

This sequence belongs to the protein kinase superfamily. Ser/Thr protein kinase family. S6 kinase subfamily. As to quaternary structure, interacts with SPHK1 and phosphatidylinositol 3-phosphate. Interacts (via PX domain) with PRDX3. As to expression, highly expressed in testis, skeletal muscle, brain, heart, placenta, kidney and liver and weakly expressed in thymus, small intestine, lung and colon.

The protein localises to the cytoplasm. Its subcellular location is the membrane. It is found in the early endosome. It catalyses the reaction L-seryl-[protein] + ATP = O-phospho-L-seryl-[protein] + ADP + H(+). It carries out the reaction L-threonyl-[protein] + ATP = O-phospho-L-threonyl-[protein] + ADP + H(+). May be involved in transmitting sphingosine-1 phosphate (SPP)-mediated signaling into the cell. Plays a role in the recruitment of PRDX3 to early endosomes. The protein is Ribosomal protein S6 kinase delta-1 (RPS6KC1) of Homo sapiens (Human).